Consider the following 177-residue polypeptide: ATP synthase subunit delta 1 (177 aa).

It belongs to the ATPase delta chain family. In terms of assembly, F-type ATPases have 2 components, F(1) - the catalytic core - and F(0) - the membrane proton channel. F(1) has five subunits: alpha(3), beta(3), gamma(1), delta(1), epsilon(1). F(0) has three main subunits: a(1), b(2) and c(10-14). The alpha and beta chains form an alternating ring which encloses part of the gamma chain. F(1) is attached to F(0) by a central stalk formed by the gamma and epsilon chains, while a peripheral stalk is formed by the delta and b chains.

The protein localises to the cell inner membrane. F(1)F(0) ATP synthase produces ATP from ADP in the presence of a proton or sodium gradient. F-type ATPases consist of two structural domains, F(1) containing the extramembraneous catalytic core and F(0) containing the membrane proton channel, linked together by a central stalk and a peripheral stalk. During catalysis, ATP synthesis in the catalytic domain of F(1) is coupled via a rotary mechanism of the central stalk subunits to proton translocation. Functionally, this protein is part of the stalk that links CF(0) to CF(1). It either transmits conformational changes from CF(0) to CF(1) or is implicated in proton conduction. This chain is ATP synthase subunit delta 1, found in Photobacterium profundum (strain SS9).